Reading from the N-terminus, the 412-residue chain is Stachydrine N-demethylase (412 aa).

The 106-residue stretch at 45 to 150 (LYAVPVCQLA…LRNLDGLIYI (106 aa)) folds into the Rieske domain. The [2Fe-2S] cluster site is built by Cys-86, His-88, Cys-106, and His-109. Residues His-204, His-209, and Asp-360 each contribute to the Fe cation site.

Belongs to the bacterial ring-hydroxylating dioxygenase alpha subunit family. In terms of assembly, homotrimer. The system is probably composed of an oxygenase subunit (Stc2) and two reductase subunits (Stc3 and Stc4). The cofactor is [2Fe-2S] cluster. Fe cation serves as cofactor.

It carries out the reaction L-proline betaine + NADH + O2 + H(+) = N-methyl-L-proline + formaldehyde + NAD(+) + H2O. It catalyses the reaction L-proline betaine + NADPH + O2 + H(+) = N-methyl-L-proline + formaldehyde + NADP(+) + H2O. Functionally, monooxygenase involved in the catabolism of stachydrine (L-proline betaine), a source of carbon and nitrogen. Part of a Rieske-type oxygenase system that catalyzes the demethylation of stachydrine to produce N-methyl-L-proline (monomethylproline). Stc2 is the catalytic subunit. The chain is Stachydrine N-demethylase from Rhizobium meliloti (strain 1021) (Ensifer meliloti).